The primary structure comprises 346 residues: MTPQPRPIPALYCVYILRSTVRHSSLYIGSTPNPPRRLSQHNGVVKGGAVRTSRNSLRPWEMVALVSGFASSTAALKFEWALTNPHTSLHIPSESRLAFSTQRKRNGQPKRPPKSLSSILSNLHLLLSVPSFARWPLRVHFFKRDVHAAWGRWCGKVERELRGSLPVVTDFGEDEGAVVARASASEPLGVVGEGLDGDGGGEEVPTWGIYGLPLDYAPLKEYVAKGQDIFEFERQGSCVVCKEEIDPEEGGLHAVCSNEGCEGVGHLRCWGRYLLKSEEGGGEGAILPVGGRCPRCKGEVHWGTMMKELTLRVRGQKEVENLLKVKRKRAPRKKTAKTKETREEDG.

Residues 10–92 (ALYCVYILRS…TNPHTSLHIP (83 aa)) form the GIY-YIG domain. The SLX1-type zinc-finger motif lies at 238 to 296 (CVVCKEEIDPEEGGLHAVCSNEGCEGVGHLRCWGRYLLKSEEGGGEGAILPVGGRCPRC). The span at 324 to 336 (KVKRKRAPRKKTA) shows a compositional bias: basic residues. The tract at residues 324 to 346 (KVKRKRAPRKKTAKTKETREEDG) is disordered. A compositionally biased stretch (basic and acidic residues) spans 337–346 (KTKETREEDG).

This sequence belongs to the SLX1 family. In terms of assembly, forms a heterodimer with SLX4. A divalent metal cation serves as cofactor.

It is found in the nucleus. Catalytic subunit of the SLX1-SLX4 structure-specific endonuclease that resolves DNA secondary structures generated during DNA repair and recombination. Has endonuclease activity towards branched DNA substrates, introducing single-strand cuts in duplex DNA close to junctions with ss-DNA. The polypeptide is Structure-specific endonuclease subunit SLX1 (Podospora anserina (strain S / ATCC MYA-4624 / DSM 980 / FGSC 10383) (Pleurage anserina)).